The following is a 160-amino-acid chain: Probable transcriptional regulator YgiV (160 aa).

Functionally, represses expression of mcbR. The sequence is that of Probable transcriptional regulator YgiV (ygiV) from Escherichia coli O157:H7.